We begin with the raw amino-acid sequence, 469 residues long: Glutamine synthetase (469 aa).

Positions 13-97 (HEVKFVDLRF…IRCDILEPGT (85 aa)) constitute a GS beta-grasp domain. In terms of domain architecture, GS catalytic spans 105–469 (PRSIAKRAED…PVEFELYYSV (365 aa)). The Mg(2+) site is built by E130 and E132. E208 lines the ATP pocket. Mg(2+) contacts are provided by E213 and E221. L-glutamate-binding positions include 265-266 (NG) and G266. H270 provides a ligand contact to Mg(2+). ATP-binding positions include 272 to 274 (HMS) and S274. Residues R322, E328, and R340 each coordinate L-glutamate. Residues R340, R345, and K353 each coordinate ATP. E358 contacts Mg(2+). R360 serves as a coordination point for L-glutamate. An O-AMP-tyrosine modification is found at Y398.

This sequence belongs to the glutamine synthetase family. In terms of assembly, oligomer of 12 subunits arranged in the form of two hexameric ring. It depends on Mg(2+) as a cofactor.

It is found in the cytoplasm. It catalyses the reaction L-glutamate + NH4(+) + ATP = L-glutamine + ADP + phosphate + H(+). Its activity is regulated as follows. The activity of this enzyme could be controlled by adenylation under conditions of abundant glutamine. Its function is as follows. Catalyzes the ATP-dependent biosynthesis of glutamine from glutamate and ammonia. This chain is Glutamine synthetase, found in Escherichia coli O157:H7.